Reading from the N-terminus, the 222-residue chain is Ribosomal RNA small subunit methyltransferase G (222 aa).

S-adenosyl-L-methionine-binding positions include glycine 80, leucine 85, 131–132 (VE), and arginine 148.

It belongs to the methyltransferase superfamily. RNA methyltransferase RsmG family.

It is found in the cytoplasm. It catalyses the reaction guanosine(527) in 16S rRNA + S-adenosyl-L-methionine = N(7)-methylguanosine(527) in 16S rRNA + S-adenosyl-L-homocysteine. Its function is as follows. Specifically methylates the N7 position of guanine in position 527 of 16S rRNA. This is Ribosomal RNA small subunit methyltransferase G from Polynucleobacter asymbioticus (strain DSM 18221 / CIP 109841 / QLW-P1DMWA-1) (Polynucleobacter necessarius subsp. asymbioticus).